Reading from the N-terminus, the 396-residue chain is Acetylornithine aminotransferase 2 (396 aa).

Pyridoxal 5'-phosphate is bound by residues 102 to 103 (GA) and Phe134. Residue Arg137 participates in N(2)-acetyl-L-ornithine binding. Residue 219–222 (DEVQ) participates in pyridoxal 5'-phosphate binding. Position 248 is an N6-(pyridoxal phosphate)lysine (Lys248). Thr276 serves as a coordination point for pyridoxal 5'-phosphate.

Belongs to the class-III pyridoxal-phosphate-dependent aminotransferase family. ArgD subfamily. As to quaternary structure, homodimer. The cofactor is pyridoxal 5'-phosphate.

It localises to the cytoplasm. The catalysed reaction is N(2)-acetyl-L-ornithine + 2-oxoglutarate = N-acetyl-L-glutamate 5-semialdehyde + L-glutamate. It functions in the pathway amino-acid biosynthesis; L-arginine biosynthesis; N(2)-acetyl-L-ornithine from L-glutamate: step 4/4. In Bordetella parapertussis (strain 12822 / ATCC BAA-587 / NCTC 13253), this protein is Acetylornithine aminotransferase 2.